The primary structure comprises 396 residues: Cytochrome b (396 aa).

4 helical membrane passes run 37–57, 81–102, 117–137, and 182–202; these read FGSLLSLCLILQIITGLILAM, WLMRNLHANGASMFFICIYAHI, WNVGVILFALTAATAFVGYVL, and FFTFHFILPFILAAMTMIHIM. Heme b-binding residues include H87 and H101. Heme b-binding residues include H186 and H200. H205 contributes to the a ubiquinone binding site. 4 helical membrane-spanning segments follow: residues 230–250, 292–312, 324–344, and 351–371; these read FKDIFGFVILLGVLFMISLLP, LGGVMALAAAIMILLVIPFTH, LAQVTFWILIADLALLTWLGG, and FILMTQIASTVYFMIFILIFP.

It belongs to the cytochrome b family. As to quaternary structure, the cytochrome bc1 complex contains 3 respiratory subunits (MT-CYB, CYC1 and UQCRFS1), 2 core proteins (UQCRC1 and UQCRC2) and probably 6 low-molecular weight proteins. Heme b is required as a cofactor.

It is found in the mitochondrion inner membrane. Its function is as follows. Component of the ubiquinol-cytochrome c reductase complex (complex III or cytochrome b-c1 complex) that is part of the mitochondrial respiratory chain. The b-c1 complex mediates electron transfer from ubiquinol to cytochrome c. Contributes to the generation of a proton gradient across the mitochondrial membrane that is then used for ATP synthesis. The chain is Cytochrome b (mt-cyb) from Lampetra fluviatilis (European river lamprey).